Reading from the N-terminus, the 494-residue chain is Ketol-acid reductoisomerase (NADP(+)) (494 aa).

Residues 14 to 208 (LDQLGRCRFM…GGHRAGCLAS (195 aa)) form the KARI N-terminal Rossmann domain. Residues 45-48 (CGAQ), Arg68, Arg76, Ser78, and 108-110 (DKQ) each bind NADP(+). The active site involves His132. Residue Gly158 coordinates NADP(+). KARI C-terminal knotted domains follow at residues 209–344 (SFVA…NYPT) and 345–487 (TDVK…MKDM). Residues Asp217, Glu221, Glu389, and Glu393 each coordinate Mg(2+). Ser414 is a substrate binding site.

This sequence belongs to the ketol-acid reductoisomerase family. Mg(2+) is required as a cofactor.

It catalyses the reaction (2R)-2,3-dihydroxy-3-methylbutanoate + NADP(+) = (2S)-2-acetolactate + NADPH + H(+). The catalysed reaction is (2R,3R)-2,3-dihydroxy-3-methylpentanoate + NADP(+) = (S)-2-ethyl-2-hydroxy-3-oxobutanoate + NADPH + H(+). It functions in the pathway amino-acid biosynthesis; L-isoleucine biosynthesis; L-isoleucine from 2-oxobutanoate: step 2/4. The protein operates within amino-acid biosynthesis; L-valine biosynthesis; L-valine from pyruvate: step 2/4. Its function is as follows. Involved in the biosynthesis of branched-chain amino acids (BCAA). Catalyzes an alkyl-migration followed by a ketol-acid reduction of (S)-2-acetolactate (S2AL) to yield (R)-2,3-dihydroxy-isovalerate. In the isomerase reaction, S2AL is rearranged via a Mg-dependent methyl migration to produce 3-hydroxy-3-methyl-2-ketobutyrate (HMKB). In the reductase reaction, this 2-ketoacid undergoes a metal-dependent reduction by NADPH to yield (R)-2,3-dihydroxy-isovalerate. This chain is Ketol-acid reductoisomerase (NADP(+)), found in Vibrio cholerae serotype O1 (strain ATCC 39541 / Classical Ogawa 395 / O395).